Consider the following 285-residue polypeptide: MFNWVKTAMLMAAITALFIVIGGMIGGSRGMTIALLFALGMNFFSYWFSDKMVLRMYNAQEVDENTAPQFYRMVRELATRANLPMPRVYLINEDAPNAFATGRNPEHAAVAATTGILRVLSEREMRGVMAHELAHVKHRDILISTITATMAGAISAIANFAMFFGGRDENGRPVNPIAGIAVALLAPIAGALIQMAISRAREFEADRGGAQISGDPQALASALDKIHRYAAGIPFQAAEAHPATAQMMIMNPLHGGGLQNLFSTHPATEERIARLMEMARTGRFD.

Transmembrane regions (helical) follow at residues 7–27 and 30–50; these read TAML…MIGG and GMTI…WFSD. H131 lines the Zn(2+) pocket. Residue E132 is part of the active site. H135 contributes to the Zn(2+) binding site. 2 helical membrane-spanning segments follow: residues 146-166 and 177-197; these read ITAT…FFGG and IAGI…QMAI. Zn(2+) is bound at residue E202.

The protein belongs to the peptidase M48B family. Requires Zn(2+) as cofactor.

It localises to the cell inner membrane. The sequence is that of Protease HtpX homolog from Burkholderia multivorans (strain ATCC 17616 / 249).